The primary structure comprises 383 residues: NAD(P) transhydrogenase subunit alpha part 1 (383 aa).

NAD(+) is bound by residues 131-134 (QNMD), Val-181, 201-203 (DVR), and Gly-231.

It belongs to the AlaDH/PNT family. As to quaternary structure, heterotrimer of two alpha chains and a beta (PntB) chain; in Rickettsia, the alpha chain is made of two subunits (PntAA and PntAB) and forms a dimer.

The enzyme catalyses NAD(+) + NADPH + H(+)(in) = NADH + NADP(+) + H(+)(out). The transhydrogenation between NADH and NADP is coupled to respiration and ATP hydrolysis and functions as a proton pump across the membrane. The chain is NAD(P) transhydrogenase subunit alpha part 1 (pntAA) from Rickettsia prowazekii (strain Madrid E).